A 167-amino-acid polypeptide reads, in one-letter code: Phospholipase A2 imperatoxin-1 (167 aa).

Tryptophan 38, glycine 40, and glycine 42 together coordinate Ca(2+). Intrachain disulfides connect cysteine 39/cysteine 61, cysteine 60/cysteine 99, cysteine 67/cysteine 92, cysteine 90/cysteine 127, and cysteine 132/cysteine 144. Residue histidine 64 is part of the active site. A Ca(2+)-binding site is contributed by aspartate 65. N-linked (GlcNAc...) asparagine glycosylation occurs at asparagine 102. Residues 136–140 (RRLAR) constitute a propeptide that is removed on maturation.

Belongs to the phospholipase A2 family. Group III subfamily. Heterodimer composed of a large subunit and a small subunit; disulfide-linked. It depends on Ca(2+) as a cofactor. As to expression, expressed by the venom gland.

The protein localises to the secreted. The catalysed reaction is a 1,2-diacyl-sn-glycero-3-phosphocholine + H2O = a 1-acyl-sn-glycero-3-phosphocholine + a fatty acid + H(+). Functionally, phospholipase toxin, which may catalyze the calcium-dependent hydrolysis of the 2-acyl groups in 3-sn-phosphoglycerides. Inhibits both skeletal (RYR1) and cardiac (RYR2) ryanodine receptors (calcium release channels). Probably blocks ryanodine receptors by generating a lipid product. This is Phospholipase A2 imperatoxin-1 from Pandinus imperator (Emperor scorpion).